The primary structure comprises 113 residues: Putative membrane protein insertion efficiency factor (113 aa).

Belongs to the UPF0161 family.

It localises to the cell inner membrane. Its function is as follows. Could be involved in insertion of integral membrane proteins into the membrane. The chain is Putative membrane protein insertion efficiency factor from Campylobacter curvus (strain 525.92).